Here is a 132-residue protein sequence, read N- to C-terminus: Transmembrane protein 170B (132 aa).

At 1-37 (MRAEGADHSMINLSVQQVLSLWAHGTVLRNLTEMWYW) the chain is on the extracellular side. Asparagine 12 carries N-linked (GlcNAc...) asparagine glycosylation. Residues 38-58 (IFLWALFSSLFVHGAAGVLMF) traverse the membrane as a helical segment. Over 59 to 68 (VMLQRHRQGR) the chain is Cytoplasmic. The helical transmembrane segment at 69-89 (VISIIAVSIGFLASVTGAMIT) threads the bilayer. The Extracellular segment spans residues 90 to 104 (SAAVAGIYRVAGKNM). Residues 105–125 (APLEALVWGVGQTVLTLIISF) traverse the membrane as a helical segment. Over 126–132 (SRILATL) the chain is Cytoplasmic.

It belongs to the TMEM170 family. In terms of assembly, interacts with CTNNB1.

It localises to the cell membrane. The chain is Transmembrane protein 170B from Mus musculus (Mouse).